The chain runs to 922 residues: Cell surface glycoprotein 2 (922 aa).

The signal sequence occupies residues 1-23 (MTGNSDKVRSLFLTALMVFSVFA). N-linked (GlcNAc...) asparagine glycosylation is found at Asn37, Asn56, Asn110, Asn220, Asn251, Asn262, and Asn292. An N-linked (GalNAc...) asparagine glycan is attached at Asn307. 15 N-linked (GlcNAc...) asparagine glycosylation sites follow: Asn319, Asn344, Asn396, Asn437, Asn490, Asn523, Asn557, Asn574, Asn587, Asn616, Asn700, Asn717, Asn809, Asn838, and Asn847. The tract at residues 816–899 (PHQDTNGNEE…GTETTEAEGP (84 aa)) is disordered. The segment covering 835–850 (YTQNGSAVTDSANVTV) has biased composition (polar residues). The span at 853–887 (EEPEDTPEDTPEDTPEDTPEDTPEDTPADTPEDTP) shows a compositional bias: acidic residues. Low complexity predominate over residues 888–899 (DTGTETTEAEGP). The chain crosses the membrane as a helical span at residues 898 to 918 (GPGFTAAIALIALVAAALLAV). Residues 899 to 901 (PGF) carry the PGF sorting signal motif.

The protein belongs to the halobacterial S-layer protein family. N-glycosylated on Asn-307; this N-linked glycan is a branched trisaccharide containing 2-amino-6-sulfo-2,6-dideoxy-glucose (sulfoquinovosamine). In terms of processing, O-glycosylated on Thr residues within the DTPE repeats in the C-terminal region; glycans consist of Glc-Gal disaccharides. Post-translationally, cleaved by the archaeosortase ArtA at the C-terminus, with removal of a short hydrophobic segment. Lipidation.

It is found in the secreted. The protein resides in the cell wall. It localises to the S-layer. The protein localises to the cell membrane. In terms of biological role, S-layer protein. The S-layer is a paracrystalline mono-layered assembly of proteins which coat the surface of the cell. In H.hispanica, the S-layer contains two different glycoproteins, Slg1 and Slg2, which share highly similar amino acid sequences. This is Cell surface glycoprotein 2 from Haloarcula hispanica (strain ATCC 33960 / DSM 4426 / JCM 8911 / NBRC 102182 / NCIMB 2187 / VKM B-1755).